A 303-amino-acid polypeptide reads, in one-letter code: NAD(+)--arginine ADP-ribosyltransferase Lart1 (303 aa).

The protein resides in the secreted. The enzyme catalyses L-arginyl-[protein] + NAD(+) = N(omega)-(ADP-D-ribosyl)-L-arginyl-[protein] + nicotinamide + H(+). ADP-ribosyltransferase that targets a specific class of NAD(+)-dependent glutamate dehydrogenase (GDH) enzymes found in fungi and protists, including many natural hosts of Legionella. Acts by targeting a conserved arginine residue in the NAD(+)-binding pocket of GDH, thereby blocking oxidative deamination of glutamate. Lart1 may target amoeba GDH to prevent a conserved stress response. In vitro, acts on Glud2 from the amoeba Dictyostelium discoideum (DdGluD2) and yeast Gdh2p but does not act on human or Legionella GDH homologs. This chain is NAD(+)--arginine ADP-ribosyltransferase Lart1, found in Legionella pneumophila subsp. pneumophila (strain Philadelphia 1 / ATCC 33152 / DSM 7513).